The primary structure comprises 130 residues: MGKSWALLTHLHSVAGPSITLLYPLYASVCAMESPSKVDDEQWLAYWILYSFITLLEMVAEPVLYWIPVWYPVKLLFVAWLALPQFKGASFIYDKVVREQLRKYRGRNRNGDADHKVHILKAEADHGRVH.

3 helical membrane passes run 5-25 (WALL…LYPL), 42-62 (QWLA…VAEP), and 63-83 (VLYW…WLAL).

Belongs to the DP1 family. As to expression, expressed in aleurone tissue and embryo.

The protein resides in the membrane. This is Protein HVA22 (HVA22) from Hordeum vulgare (Barley).